The primary structure comprises 918 residues: Cap-specific mRNA (nucleoside-2'-O-)-methyltransferase 1 (918 aa).

The span at 1 to 18 (MADRKSDEGEDEYQHKEQ) shows a compositional bias: basic and acidic residues. Disordered regions lie at residues 1–56 (MADR…EERA) and 62–81 (KRGYQAGDDEEDDFTAEEEP). A compositionally biased stretch (polar residues) spans 19-30 (MVTNRTSSFQPK). A compositionally biased stretch (basic and acidic residues) spans 43–56 (RAADRREEFMEERA). The span at 68-80 (GDDEEDDFTAEEE) shows a compositional bias: acidic residues. In terms of domain architecture, G-patch spans 86–132 (PLTVAERLMAAMGHKAGEGLGKHGQGISEPIASSTQRGRTGLGHNAG). Positions 236–465 (FFQNRAAMKT…ERYITCKGLR (230 aa)) constitute a RrmJ-type SAM-dependent 2'-O-MTase domain. Residues G298 and D379 each contribute to the S-adenosyl-L-methionine site. K419 (proton acceptor) is an active-site residue.

The enzyme catalyses a 5'-end (N(7)-methyl 5'-triphosphoguanosine)-ribonucleoside in mRNA + S-adenosyl-L-methionine = a 5'-end (N(7)-methyl 5'-triphosphoguanosine)-(2'-O-methyl-ribonucleoside) in mRNA + S-adenosyl-L-homocysteine + H(+). S-adenosyl-L-methionine-dependent methyltransferase that mediates mRNA cap1 2'-O-ribose methylation to the 5'-cap structure of mRNAs. Methylates the ribose of the first nucleotide of a m(7)GpppG-capped mRNA to produce m(7)GpppNmp (cap1). Cap1 modification is linked to higher levels of translation. This chain is Cap-specific mRNA (nucleoside-2'-O-)-methyltransferase 1, found in Caenorhabditis elegans.